A 598-amino-acid chain; its full sequence is DNA mismatch repair protein MutL (598 aa).

The protein belongs to the DNA mismatch repair MutL/HexB family.

In terms of biological role, this protein is involved in the repair of mismatches in DNA. It is required for dam-dependent methyl-directed DNA mismatch repair. May act as a 'molecular matchmaker', a protein that promotes the formation of a stable complex between two or more DNA-binding proteins in an ATP-dependent manner without itself being part of a final effector complex. This chain is DNA mismatch repair protein MutL, found in Geotalea daltonii (strain DSM 22248 / JCM 15807 / FRC-32) (Geobacter daltonii).